Here is a 442-residue protein sequence, read N- to C-terminus: GTPase Der (442 aa).

EngA-type G domains lie at 3 to 167 (PTIV…PPDV) and 177 to 350 (PRIA…AAAM). GTP is bound by residues 9-16 (GRPNVGKS), 56-60 (DTAGF), 119-122 (NKSE), 183-190 (GRPNVGKS), 230-234 (DTAGL), and 295-298 (NKWD). The 85-residue stretch at 351-435 (VNLSTPRLTR…PLRIQFRTAH (85 aa)) folds into the KH-like domain.

The protein belongs to the TRAFAC class TrmE-Era-EngA-EngB-Septin-like GTPase superfamily. EngA (Der) GTPase family. As to quaternary structure, associates with the 50S ribosomal subunit.

GTPase that plays an essential role in the late steps of ribosome biogenesis. This is GTPase Der from Aromatoleum aromaticum (strain DSM 19018 / LMG 30748 / EbN1) (Azoarcus sp. (strain EbN1)).